A 434-amino-acid chain; its full sequence is Cullin-like protein 5 (434 aa).

Residues 1–34 form a disordered region; it reads MKRSISPDPFSSTKSPKLVHHSPDDGGAEGNPYR.

Belongs to the cullin family.

The polypeptide is Cullin-like protein 5 (Arabidopsis thaliana (Mouse-ear cress)).